The primary structure comprises 299 residues: Lathosterol oxidase (299 aa).

Helical transmembrane passes span 32–52, 79–99, and 117–137; these read ISLLIVTNLGAYILYFFCATL, FTVKSLPWISIPTVSLFLLEL, and IHLMVSVVSFLFFTDMLIYWI. The Fatty acid hydroxylase domain maps to 124-252; it reads VSFLFFTDML…YFTLWDRIGG (129 aa). The Histidine box-1 motif lies at 138 to 143; it reads HRGLHH. A Histidine box-2 motif is present at residues 151-155; that stretch reads HKPHH. A helical transmembrane segment spans residues 186 to 206; sequence VFPLHKVVYLGLYVLVNVWTI. Positions 228–233 match the Histidine box-3 motif; the sequence is HHTDHH. S253 is modified (phosphoserine). The disordered stretch occupies residues 280–299; that stretch reads FAENGCKGKKVGNGEFTKNK.

The protein belongs to the sterol desaturase family. It depends on Fe cation as a cofactor.

The protein localises to the endoplasmic reticulum membrane. The catalysed reaction is a Delta(7)-sterol + 2 Fe(II)-[cytochrome b5] + O2 + 2 H(+) = a Delta(5),Delta(7)-sterol + 2 Fe(III)-[cytochrome b5] + 2 H2O. It catalyses the reaction lathosterol + 2 Fe(II)-[cytochrome b5] + O2 + 2 H(+) = 7-dehydrocholesterol + 2 Fe(III)-[cytochrome b5] + 2 H2O. It carries out the reaction 5alpha-cholesta-7,24-dien-3beta-ol + 2 Fe(II)-[cytochrome b5] + O2 + 2 H(+) = 7-dehydrodesmosterol + 2 Fe(III)-[cytochrome b5] + 2 H2O. It participates in steroid biosynthesis; cholesterol biosynthesis. In terms of biological role, catalyzes the penultimate step of the biosynthesis of cholesterol, the dehydrogenation of lathosterol into 7-dehydrocholesterol (7-DHC). Cholesterol is the major sterol component in mammalian membranes and a precursor for bile acid and steroid hormone synthesis. In addition to its essential role in cholesterol biosynthesis, it also indirectly regulates ferroptosis through the production of 7-DHC. By diverting the spread of damage caused by peroxyl radicals from the phospholipid components to its sterol nucleus, 7-DHC prevents this form of cell death. The protein is Lathosterol oxidase of Mus musculus (Mouse).